A 634-amino-acid chain; its full sequence is Fluorothreonine transaldolase (634 aa).

Residues Tyr67, His221, and His247 each coordinate pyridoxal 5'-phosphate. At Lys248 the chain carries N6-(pyridoxal phosphate)lysine. Residue Arg375 coordinates pyridoxal 5'-phosphate. The disordered stretch occupies residues 428–456 (TGDPASAAGPPARERYAPPTAPAGHPARP).

Belongs to the SHMT family. Requires pyridoxal 5'-phosphate as cofactor.

It catalyses the reaction fluoroacetaldehyde + L-threonine = 4-fluoro-L-threonine + acetaldehyde. Its function is as follows. Transaldolase that catalyzes the final step in 4-fluorothreonine biosynthesis. Mediates a L-threonine/fluoroaceldehyde to 4-fluoro-L-threonine/acetaldehyde crossover reaction. Can also convert chloroacetaldehyde into 4-chloro-L-threonine. Does not use glycine as a substrate. The protein is Fluorothreonine transaldolase of Streptantibioticus cattleyicolor (Streptomyces cattleya).